Here is an 84-residue protein sequence, read N- to C-terminus: Putative antitoxin RelB4 (84 aa).

Its function is as follows. Antitoxin component of a type II toxin-antitoxin (TA) system. Its cognate toxin is RelE4 (Potential). The sequence is that of Putative antitoxin RelB4 (relB4) from Methanocaldococcus jannaschii (strain ATCC 43067 / DSM 2661 / JAL-1 / JCM 10045 / NBRC 100440) (Methanococcus jannaschii).